The chain runs to 293 residues: Homoserine kinase (293 aa).

84-94 (PLSRGLGSSSA) provides a ligand contact to ATP.

The protein belongs to the GHMP kinase family. Homoserine kinase subfamily.

It localises to the cytoplasm. The enzyme catalyses L-homoserine + ATP = O-phospho-L-homoserine + ADP + H(+). It participates in amino-acid biosynthesis; L-threonine biosynthesis; L-threonine from L-aspartate: step 4/5. Its function is as follows. Catalyzes the ATP-dependent phosphorylation of L-homoserine to L-homoserine phosphate. The polypeptide is Homoserine kinase (Nautilia profundicola (strain ATCC BAA-1463 / DSM 18972 / AmH)).